A 263-amino-acid chain; its full sequence is Exosome complex component Rrp4 (263 aa).

One can recognise an S1 motif domain in the interval 51-127 (GKYIPSRKDF…KAMKVELSMR (77 aa)). The KH domain occupies 135–196 (SKGRIIEVVP…DRLTTAIEMI (62 aa)). Residues 213–263 (LRGEPEGTEGSDEEQLVDEEVAGVSLEDDDVTEETSRKVDVLLDNDTDETN) are disordered. Positions 218–245 (EGTEGSDEEQLVDEEVAGVSLEDDDVTE) are enriched in acidic residues.

The protein belongs to the RRP4 family. Component of the archaeal exosome complex. Forms a trimer of Rrp4 and/or Csl4 subunits. The trimer associates with a hexameric ring-like arrangement composed of 3 Rrp41-Rrp42 heterodimers.

It localises to the cytoplasm. In terms of biological role, non-catalytic component of the exosome, which is a complex involved in RNA degradation. Increases the RNA binding and the efficiency of RNA degradation. Confers strong poly(A) specificity to the exosome. The polypeptide is Exosome complex component Rrp4 (Methanococcoides burtonii (strain DSM 6242 / NBRC 107633 / OCM 468 / ACE-M)).